Reading from the N-terminus, the 429-residue chain is C4-dicarboxylate transport protein (429 aa).

The next 8 membrane-spanning stretches (helical) occupy residues 3-23, 44-64, 76-96, 142-162, 184-204, 222-242, 326-346, and 352-372; these read LTIF…GVLL, LIKM…IAGM, IALL…LLIV, IGAF…LFGF, VIFG…FGAM, LIAC…GSIA, VIHQ…AAGV, and IVLA…LALI.

Belongs to the dicarboxylate/amino acid:cation symporter (DAACS) (TC 2.A.23) family.

The protein localises to the cell inner membrane. Responsible for the transport of dicarboxylates such as succinate, fumarate, and malate from the periplasm across the membrane. The sequence is that of C4-dicarboxylate transport protein from Serratia proteamaculans (strain 568).